Here is a 1043-residue protein sequence, read N- to C-terminus: Sarcoplasmic/endoplasmic reticulum calcium ATPase 2 (1043 aa).

Residues 1–48 (MENAHTKTVEEVLGHFGVNESTGLSLEQVKKLKERWGSNELPAEEGKT) are Cytoplasmic-facing. Ser38 carries the phosphoserine modification. Residues 49-69 (LLELVIEQFEDLLVRILLLAA) traverse the membrane as a helical segment. Residues 70-89 (CISFVLAWFEEGEETITAFV) are Lumenal-facing. The helical transmembrane segment at 90 to 110 (EPFVILLILVANAIVGVWQER) threads the bilayer. Topologically, residues 111 to 253 (NAENAIEALK…QERTPLQQKL (143 aa)) are cytoplasmic. Residues 254 to 273 (DEFGEQLSKVISLICIAVWI) traverse the membrane as a helical segment. Topologically, residues 274 to 295 (INIGHFNDPVHGGSWIRGAIYY) are lumenal. Residues Tyr294 and Tyr295 each carry the 3'-nitrotyrosine modification. The chain crosses the membrane as a helical span at residues 296 to 313 (FKIAVALAVAAIPEGLPA). The Ca(2+) site is built by Val304, Ala305, Ile307, and Glu309. The Cytoplasmic portion of the chain corresponds to 314–756 (VITTCLALGT…EEGRAIYNNM (443 aa)). Asp351 functions as the 4-aspartylphosphate intermediate in the catalytic mechanism. Mg(2+)-binding residues include Asp351 and Thr353. Thr353 contacts ATP. Phosphothreonine is present on Thr441. Residues Glu442, Arg489, and Lys514 each coordinate ATP. Residue Ser531 is modified to Phosphoserine. Arg559 is an ATP binding site. The segment at 575 to 594 (MHLEDSANFIKYETNLTFVG) is interaction with HAX1. Position 580 is a phosphoserine (Ser580). The ATP site is built by Thr624, Gly625, and Asp626. Phosphoserine occurs at positions 661 and 663. Residues Arg677 and Lys683 each coordinate ATP. Asp702 provides a ligand contact to Mg(2+). Asn705 is an ATP binding site. Residues 757 to 776 (KQFIRYLISSNVGEVVCIFL) form a helical membrane-spanning segment. Ca(2+) contacts are provided by Asn767 and Glu770. The Lumenal segment spans residues 777-786 (TAALGFPEAL). A helical transmembrane segment spans residues 787–807 (IPVQLLWVNLVTDGLPATALG). Positions 787-807 (IPVQLLWVNLVTDGLPATALG) are interaction with PLN. Residues 788 to 1043 (PVQLLWVNLV…DTNFSDMFWS (256 aa)) form an interaction with TMEM64 and PDIA3 region. 3 residues coordinate Ca(2+): Asn795, Thr798, and Asp799. Over 808 to 827 (FNPPDLDIMNKPPRNPKEPL) the chain is Cytoplasmic. Residues 828–850 (ISGWLFFRYLAIGCYVGAATVGA) traverse the membrane as a helical segment. At 851–896 (AAWWFIAADGGPRVSFYQLSHFLQCKEDNPDFEGVDCAIFESPYPM) the chain is on the lumenal side. An intrachain disulfide couples Cys875 to Cys887. The helical transmembrane segment at 897-916 (TMALSVLVTIEMCNALNSLS) threads the bilayer. Glu907 lines the Ca(2+) pocket. Residues 917 to 929 (ENQSLLRMPPWEN) are Cytoplasmic-facing. Residues 930 to 948 (IWLVGSICLSMSLHFLILY) traverse the membrane as a helical segment. The interval 931-942 (WLVGSICLSMSL) is interaction with PLN. At 949 to 963 (VEPLPLIFQITPLNL) the chain is on the lumenal side. The chain crosses the membrane as a helical span at residues 964–984 (TQWLMVLKISLPVILMDETLK). The Cytoplasmic portion of the chain corresponds to 985–1043 (FVARNYLEPGKECAQPATKPSCSLSACTDGISWPFVLLIMPLVVWVYSTDTNFSDMFWS).

The protein belongs to the cation transport ATPase (P-type) (TC 3.A.3) family. Type IIA subfamily. In terms of assembly, interacts with sarcolipin (SLN); the interaction inhibits ATP2A2 Ca(2+) affinity. Interacts with phospholamban (PLN); the interaction inhibits ATP2A2 Ca(2+) affinity. Interacts with myoregulin (MRLN). Interacts with ARLN and ERLN; the interactions inhibit ATP2A2 Ca(2+) affinity. Interacts with STRIT1/DWORF; the interaction results in activation of ATP2A2. Interacts with the monomeric forms of SLN, PLN, ARLN, ERLN and STRI1/DWORF. Interacts with HAX1. Interacts with S100A8 and S100A9. Interacts with SLC35G1 and STIM1. Interacts with TMEM203. Interacts with TMEM64 and PDIA3. Interacts with TMX1. Interacts with TMX2. Interacts with VMP1; VMP1 competes with PLN and SLN to prevent them from forming an inhibitory complex with ATP2A2. Interacts with ULK1. Interacts with S100A1 in a Ca(2+)-dependent manner. Interacts with TUNAR. Interacts with FLVCR2; this interaction occurs in the absence of heme and promotes ATP2A2 proteasomal degradation; this complex is dissociated upon heme binding. Interacts with FNIP1. As to quaternary structure, interacts with TRAM2 (via C-terminus). Mg(2+) is required as a cofactor. Nitrated under oxidative stress. Nitration on the two tyrosine residues inhibits catalytic activity. In terms of processing, serotonylated on Gln residues by TGM2 in response to hypoxia, leading to its inactivation. As to expression, isoform 2 is highly expressed in heart and slow twitch skeletal muscle. Isoform 1 is widely expressed.

The protein localises to the endoplasmic reticulum membrane. Its subcellular location is the sarcoplasmic reticulum membrane. The catalysed reaction is Ca(2+)(in) + ATP + H2O = Ca(2+)(out) + ADP + phosphate + H(+). Has different conformational states with differential Ca2+ affinity. The E1 conformational state (active form) shows high Ca(2+) affinity, while the E2 state exhibits low Ca(2+) affinity. Binding of ATP allosterically increases its affinity for subsequent binding of Ca2+. Reversibly inhibited by phospholamban (PLN) at low calcium concentrations. PLN inhibits ATP2A2 Ca(2+) affinity by disrupting its allosteric activation by ATP. Inhibited by sarcolipin (SLN) and myoregulin (MRLN). The inhibition is blocked by VMP1. Enhanced by STRIT1/DWORF; STRIT1 increases activity by displacing sarcolipin (SLN), phospholamban (PLN) and myoregulin (MRLN). Stabilizes SERCA2 in its E2 state. In terms of biological role, this magnesium-dependent enzyme catalyzes the hydrolysis of ATP coupled with the translocation of calcium from the cytosol to the sarcoplasmic reticulum lumen. Involved in autophagy in response to starvation. Upon interaction with VMP1 and activation, controls ER-isolation membrane contacts for autophagosome formation. Also modulates ER contacts with lipid droplets, mitochondria and endosomes. In coordination with FLVCR2 mediates heme-stimulated switching from mitochondrial ATP synthesis to thermogenesis. Its function is as follows. Involved in the regulation of the contraction/relaxation cycle. Acts as a regulator of TNFSF11-mediated Ca(2+) signaling pathways via its interaction with TMEM64 which is critical for the TNFSF11-induced CREB1 activation and mitochondrial ROS generation necessary for proper osteoclast generation. Association between TMEM64 and SERCA2 in the ER leads to cytosolic Ca(2+) spiking for activation of NFATC1 and production of mitochondrial ROS, thereby triggering Ca(2+) signaling cascades that promote osteoclast differentiation and activation. The polypeptide is Sarcoplasmic/endoplasmic reticulum calcium ATPase 2 (Atp2a2) (Rattus norvegicus (Rat)).